The primary structure comprises 247 residues: E3 ubiquitin ligase TRIM40 (247 aa).

Residues 12-55 (CPICLDPLKEAVSTDCRHLFCRMCLIRHMDKASVSGVLSCPVCR) form an RING-type zinc finger. The segment at 64–105 (GDNYICHTHQKRVCRFCESSRHLLCEECLQSPEHRAHTELSI) adopts a B box-type zinc-finger fold. 4 residues coordinate Zn(2+): Cys-69, His-72, Cys-91, and His-97. Positions 111-148 (HYKERLNRRSRKLRKDLGDLQRLKAQEEKMLQALQVDW) form a coiled coil.

This sequence belongs to the TRIM/RBCC family. Interacts with NEDD8.

It carries out the reaction S-ubiquitinyl-[E2 ubiquitin-conjugating enzyme]-L-cysteine + [acceptor protein]-L-lysine = [E2 ubiquitin-conjugating enzyme]-L-cysteine + N(6)-ubiquitinyl-[acceptor protein]-L-lysine.. In terms of biological role, E3 ubiquitin-protein ligase that plays a role in the limitation of the innate immune response. Mediates inhibition of the RLR signaling pathway by ubiquitinating RIGI and IFIH1 receptors, leading to their proteasomal degradation. Also promotes the neddylation of IKBKG/NEMO, stabilizing NFKBIA, and thereby inhibiting of NF-kappa-B nuclear translocation and activation. The chain is E3 ubiquitin ligase TRIM40 (Trim40) from Rattus norvegicus (Rat).